We begin with the raw amino-acid sequence, 680 residues long: MPRYTESEWLTDFIIDALDSGRFWGVGWLDEQKRIFTVPGRNRRERMPEGFDDFYEAFLEERRRHGLPEIPETETGLGCFGRLLRTANRARQERPFTIYKGKMKLNRWIMTPRPYKGCEGCLVYLTQEPAMKNMLKALFGIYPHDDKHREKALRRSLRKKAQREAARKQAAAVATPTTSSAAEVSSRSQSEDTESSDSENELWVGAQGFVGRDMHSLFFEEPEPSGFGSSGQSSSLLAPDSPRPSTSQVQGPLHVHTPTDLCLPTGGLPSPVIFPHETQGLLAPPAGQSQTPFSPEGPVPSHVSGLDDCLPMVDHIEGCLLDLLSDVGQELPDLGDLGELLCETASPQGPMQSEGGEEGSTESVSVLPATHPLESSAPGASVMGSGQELPDLGDLSELLCETASPQGPMQSEGGEEGSTESVSVLPATHPLESSAPGASVMGSSFQASDNVDDFIDCIPPLCRDDRDVEDQEKADQTFYWYGSDMRPKVLTATQSVAAYLSKKQAIYKVGDKLVPLVVEVYYFGEKVKTHFDLTGGIVICSQVPEASPEHICQTVPPYKCLLPRTAHCSVDANRTLEQTLDRFSMGVVAIGTNMGIFLKGLLEYPAYFVGNASRRRIGKCRPLSHRHEIQQAFDVERHNREPEGSRYASLFLGRRPSPEYDWDHYPVILHIYLAPFYHRD.

The IRF tryptophan pentad repeat DNA-binding region spans 7–103 (SEWLTDFIID…RPFTIYKGKM (97 aa)). Disordered regions lie at residues 156–201 (SLRK…SENE), 220–257 (EEPE…HVHT), 343–365 (ETAS…ESVS), and 403–423 (ASPQ…ESVS). Over residues 168–188 (KQAAAVATPTTSSAAEVSSRS) the composition is skewed to low complexity. The span at 191-200 (EDTESSDSEN) shows a compositional bias: acidic residues. Positions 220–240 (EEPEPSGFGSSGQSSSLLAPD) are enriched in low complexity.

Belongs to the IRF family. As to quaternary structure, interacts with host EIF2AK2/PKR. Interacts with host USP7.

The protein resides in the host nucleus. It localises to the host cytoplasm. Its function is as follows. DNA-binding transcription factor that plays a role in the modulation of host immune response. Acts by interacting with host EIF2AK2/PKR and inhibiting its activation. In turn, EIF2AK2/PKR substrates including EIF2S1 or histone H2A are not phosphorylated. Inhibits type I interferon signaling by targeting host IRF3 during viral reactivation from latency. Attenuates the transcriptional activity of host FOXO3 via activation of the AKT1 signaling pathway, inhibiting FOXO3-mediated apoptosis. Also suppresses the expression of viral early lytic genes in both newly infected and reactivated infected host cells allowing regulation of viral life cycle by harnessing the interferon pathway. Mechanistically, promotes host PML bodies formation as well as host antiviral restriction factors IFIT1-3 expression leading to inhibition of viral early lytic proteins. Also regulates host TRAF3 and TRAF6 ubiquitination by interacting with USP7 deubiquitinase thereby influencing TRAF3/6-mediated signal transduction. The chain is Viral IRF2-like protein (vIRF-2) from Human herpesvirus 8 type P (isolate GK18) (HHV-8).